A 170-amino-acid polypeptide reads, in one-letter code: Protein-export protein SecB (170 aa).

The protein belongs to the SecB family. In terms of assembly, homotetramer, a dimer of dimers. One homotetramer interacts with 1 SecA dimer.

It is found in the cytoplasm. One of the proteins required for the normal export of preproteins out of the cell cytoplasm. It is a molecular chaperone that binds to a subset of precursor proteins, maintaining them in a translocation-competent state. It also specifically binds to its receptor SecA. The protein is Protein-export protein SecB of Pasteurella multocida (strain Pm70).